Consider the following 395-residue polypeptide: Mitogen-activated protein kinase 6 (395 aa).

Residues 1–35 (MDGGSGQPAADTEMTEAPGGFPAAAPSPQMPGIEN) form a disordered region. Low complexity predominate over residues 17 to 27 (APGGFPAAAPS). The 286-residue stretch at 63 to 348 (KPPIMPIGKG…VLDALAHPYL (286 aa)) folds into the Protein kinase domain. Residues 69–77 (IGKGAYGIV) and Lys-92 each bind ATP. The active-site Proton acceptor is the Asp-189. Thr-221 is subject to Phosphothreonine. Residues 221–223 (TEY) carry the TXY motif. A Phosphotyrosine modification is found at Tyr-223. Position 226 is a phosphothreonine (Thr-226).

Belongs to the protein kinase superfamily. CMGC Ser/Thr protein kinase family. MAP kinase subfamily. As to quaternary structure, interacts with MEKK1, MKK1 and MKK2. May form a ternary complex with MEKK1 and MKK1 or MKK2. Interacts with NDPK2, AP2C1, MKP1 and PTP1. Interacts with DSPTP1B/MKP2, especially during HR-like responses triggered by fungal elicitors. Interacts with MKK4, MKK5 and MKK6. Binds to LIP5. Interacts with VQ4 and IKU1/VQ14. Interacts with RACK1A, RACK1B and RACK1C. Interacts with PTP1. Interacts with FLZ9. Binds to BASL and YDA. Post-translationally, dually phosphorylated on Thr-221 and Tyr-223, which activates the enzyme. Dephosphorylated by DSPTP1B/MKP2.

Its subcellular location is the cytoplasm. The protein resides in the nucleus. It localises to the cell cortex. The enzyme catalyses L-seryl-[protein] + ATP = O-phospho-L-seryl-[protein] + ADP + H(+). The catalysed reaction is L-threonyl-[protein] + ATP = O-phospho-L-threonyl-[protein] + ADP + H(+). With respect to regulation, activated by threonine and tyrosine phosphorylation. Activated by the MAP kinase kinases MKK2, MKK3, MKK4, MKK5, MKK7 and MKK9. Activated in response to touch, wounding, low temperature, low humidity, salt stress, hydrogen peroxide, ozone, ACC (an ethylene precursor), jasmonic acid (JA), mastoparan and UVC. Activated in response to elicitors: oligogalacturonides, hexameric chitin fragments, fungal xylanase, and the bacterial flagellin and harpin. Activated upon Pseudomonas syringae pv. tomato DC3000 infection. Repressed by the protein phosphatase 2C AP2C1 and the protein-tyrosine-phosphatases MKP1 and PTP1. Repressed by DSPTP1B/MKP2-mediated dephosphorylation. Activated by polarized BASL. Triggered by MKKK20 in response to various abiotic stresses, including osmotic stress, cold and reactive oxygen species (ROS). Activated by MKK5 in response to abscisic acid (ABA). In terms of biological role, mitogen-activated protein kinase (MAPK) which regulates abscisic acid (ABA) responses in a MAPKKK20-MKK5-MPK6 cascade involved in root growth (e.g. root cell division and elongation) and stomatal response. Involved in oxidative stress-mediated signaling cascade (such as ozone). Involved in the innate immune MAP kinase signaling cascade (MEKK1, MKK4/MKK5 and MPK3/MPK6) downstream of bacterial flagellin receptor FLS2. May be involved in hypersensitive response (HR)-mediated signaling cascade by modulating LIP5 phosphorylation and subsequent multivesicular bodies (MVBs) trafficking. May phosphorylate regulators of WRKY transcription factors. Phosphorylates 1-aminocyclopropane-1-carboxylic acid synthases (ACS2 and ACS6) and may be involved in the regulation of bacterial elicitor flagellin-induced ethylene production. Regulates locally gene-mediated and basal resistance response to certain pathogens. May be involved in the cold and salinity stress-mediated MAP kinase signaling cascade (MEKK1, MKK1/MKK2 and MPK4/MPK6). MKK1-MPK6 module mediates abscisic acid (ABA)-dependent CAT1 expression with H(2)O(2) production and response to drought and salt stress. MKK1-MPK6 module is also involved in sugar signaling during the process of seed germination. MKK3-MPK6 module plays an important role in the jasmonate signal transduction pathway through the negative regulation of MYC2/JIN1 expression. MKK9-MPK3/MPK6 module phosphorylates and activates EIN3, leading to the promotion of EIN3-mediated transcription in ethylene signaling. MPK3/MPK6 cascade regulates camalexin synthesis through transcriptional regulation of the biosynthetic genes after pathogen infection. MKK9-MPK6 module positively regulates leaf senescence. YDA-MKK4/MKK5-MPK3/MPK6 module regulates stomatal cell fate before the guard mother cell (GMC) is specified. When activated, reinforces the feedback loop by phosphorylating BASL, and inhibits stomatal fate by phosphorylating SPCH. This MAPK cascade also functions downstream of the ER receptor in regulating coordinated local cell proliferation, which shapes the morphology of plant organs. In Arabidopsis thaliana (Mouse-ear cress), this protein is Mitogen-activated protein kinase 6.